We begin with the raw amino-acid sequence, 146 residues long: Phosphoribosyl-AMP cyclohydrolase (146 aa).

Asp95 is a binding site for Mg(2+). Residue Cys96 participates in Zn(2+) binding. Mg(2+) is bound by residues Asp97 and Asp99. 2 residues coordinate Zn(2+): Cys112 and Cys119.

It belongs to the PRA-CH family. Homodimer. Mg(2+) serves as cofactor. Requires Zn(2+) as cofactor.

Its subcellular location is the cytoplasm. It carries out the reaction 1-(5-phospho-beta-D-ribosyl)-5'-AMP + H2O = 1-(5-phospho-beta-D-ribosyl)-5-[(5-phospho-beta-D-ribosylamino)methylideneamino]imidazole-4-carboxamide. It participates in amino-acid biosynthesis; L-histidine biosynthesis; L-histidine from 5-phospho-alpha-D-ribose 1-diphosphate: step 3/9. Catalyzes the hydrolysis of the adenine ring of phosphoribosyl-AMP. In Chromohalobacter salexigens (strain ATCC BAA-138 / DSM 3043 / CIP 106854 / NCIMB 13768 / 1H11), this protein is Phosphoribosyl-AMP cyclohydrolase.